We begin with the raw amino-acid sequence, 354 residues long: Guanine nucleotide-binding protein G(i) subunit alpha-1 (354 aa).

Gly2 carries N-myristoyl glycine lipidation. Residue Cys3 is the site of S-palmitoyl cysteine attachment. One can recognise a G-alpha domain in the interval 32 to 354; sequence REVKLLLLGA…KNNLKDCGLF (323 aa). The segment at 35–48 is G1 motif; the sequence is KLLLLGAGESGKST. GTP is bound by residues 43-48, 150-151, and 175-178; these read ESGKST, DS, and LRTR. Mg(2+) is bound at residue Ser47. Residues 173 to 181 are G2 motif; the sequence is DVLRTRVKT. Thr181 contacts Mg(2+). A G3 motif region spans residues 196-205; sequence FKMFDVGGQR. GTP-binding positions include 200–204, 269–272, and Ala326; these read DVGGQ and NKKD. The G4 motif stretch occupies residues 265–272; that stretch reads ILFLNKKD. The tract at residues 324-329 is G5 motif; sequence TCATDT.

This sequence belongs to the G-alpha family. G(i/o/t/z) subfamily. As to quaternary structure, heterotrimeric G proteins are composed of 3 units; alpha, beta and gamma. The alpha chain contains the guanine nucleotide binding site. Part of a spindle orientation complex at least composed of GNAI1, GPSM2 and NUMA1. Identified in complex with the beta subunit GNB1 and the gamma subunit GNG1. Identified in complex with the beta subunit GNB1 and the gamma subunit GNG2. Component of the TAS2R14-GNAI1 complex, consisting of TAS2R14, GNAI1, GNB1 and GNG2; within the complex interacts with TAS2R14; this complex plays a role in the perception of bitterness. GTP binding causes dissociation of the heterotrimer, liberating the individual subunits so that they can interact with downstream effector proteins. Interacts (GDP-bound form) with GPSM1; this inhibits guanine nucleotide exchange and GTP binding. Interacts (GDP-bound form) with GPSM2 (via GoLoco domains); this inhibits guanine nucleotide exchange. Interacts with RGS10; this strongly enhances GTP hydrolysis. Interacts with RGS1 and RGS16; this strongly enhances GTPase activity. Interacts with RGS4. Interacts with RGS12. Interacts (via active GTP- or inactive GDP-bound forms) with RGS14 (via RGS and GoLoco domains). Interacts with RGS3, RGS6, RGS7, RGS8, RGS17, RGS18 and RGS20 (in vitro). Interacts (GDP-bound form) with RIC8A (via C-terminus); promoting GNAI1 folding and association with the plasma membrane. Interacts (inactive GDP-bound form) with NUCB1 (via GBA motif); the interaction leads to activation of GNAI1. Interacts (inactive GDP-bound form) with CCDC88C/DAPLE (via GBA motif); the interaction leads to activation of GNAI1. Interacts (inactive GDP-bound form) with CCDC8A/GIV (via GBA motif). Post-translationally, myristoylation at Gly-2 is required for membrane anchoring before palmitoylation. In terms of processing, palmitoylation at Cys-3 varies with membrane lipid composition.

It is found in the nucleus. The protein localises to the cytoplasm. The protein resides in the cell membrane. Its subcellular location is the cytoskeleton. It localises to the microtubule organizing center. It is found in the centrosome. The protein localises to the cell cortex. The protein resides in the membrane. It catalyses the reaction GTP + H2O = GDP + phosphate + H(+). Guanine nucleotide-binding proteins (G proteins) function as transducers downstream of G protein-coupled receptors (GPCRs) in numerous signaling cascades. The alpha chain contains the guanine nucleotide binding site and alternates between an active, GTP-bound state and an inactive, GDP-bound state. Signaling by an activated GPCR promotes GDP release and GTP binding. The alpha subunit has a low GTPase activity that converts bound GTP to GDP, thereby terminating the signal. Both GDP release and GTP hydrolysis are modulated by numerous regulatory proteins. Signaling is mediated via effector proteins, such as adenylate cyclase. Inhibits adenylate cyclase activity of ADCY1, ADCY5 and ADCY6, leading to decreased intracellular cAMP levels. The inactive GDP-bound form prevents the association of RGS14 with centrosomes and is required for the translocation of RGS14 from the cytoplasm to the plasma membrane. Required for normal cytokinesis during mitosis. Required for cortical dynein-dynactin complex recruitment during metaphase. The polypeptide is Guanine nucleotide-binding protein G(i) subunit alpha-1 (GNAI1) (Bos taurus (Bovine)).